A 428-amino-acid polypeptide reads, in one-letter code: Enolase (428 aa).

Gln-165 contributes to the (2R)-2-phosphoglycerate binding site. Glu-207 (proton donor) is an active-site residue. Positions 244, 285, and 312 each coordinate Mg(2+). Positions 337, 366, 367, and 388 each coordinate (2R)-2-phosphoglycerate. Residue Lys-337 is the Proton acceptor of the active site.

It belongs to the enolase family. In terms of assembly, component of the RNA degradosome, a multiprotein complex involved in RNA processing and mRNA degradation. The cofactor is Mg(2+).

The protein resides in the cytoplasm. It is found in the secreted. The protein localises to the cell surface. The catalysed reaction is (2R)-2-phosphoglycerate = phosphoenolpyruvate + H2O. It functions in the pathway carbohydrate degradation; glycolysis; pyruvate from D-glyceraldehyde 3-phosphate: step 4/5. Catalyzes the reversible conversion of 2-phosphoglycerate (2-PG) into phosphoenolpyruvate (PEP). It is essential for the degradation of carbohydrates via glycolysis. The chain is Enolase from Coxiella burnetii (strain Dugway 5J108-111).